A 444-amino-acid chain; its full sequence is Homogentisate 1,2-dioxygenase (444 aa).

Histidine 298 (proton acceptor) is an active-site residue. Residues histidine 341 and glutamate 347 each contribute to the Fe cation site. Residues tyrosine 356 and histidine 377 each coordinate homogentisate. Fe cation is bound at residue histidine 377.

Belongs to the homogentisate dioxygenase family. As to quaternary structure, hexamer; dimer of trimers. The cofactor is Fe cation.

The catalysed reaction is homogentisate + O2 = 4-maleylacetoacetate + H(+). It participates in amino-acid degradation; L-phenylalanine degradation; acetoacetate and fumarate from L-phenylalanine: step 4/6. In terms of biological role, involved in the catabolism of homogentisate (2,5-dihydroxyphenylacetate or 2,5-OH-PhAc), a central intermediate in the degradation of phenylalanine and tyrosine. Catalyzes the oxidative ring cleavage of the aromatic ring of homogentisate to yield maleylacetoacetate. This Burkholderia ambifaria (strain MC40-6) protein is Homogentisate 1,2-dioxygenase.